A 196-amino-acid polypeptide reads, in one-letter code: GTP cyclohydrolase-2 (196 aa).

49–53 (RVHSE) contacts GTP. Residues Cys-54, Cys-65, and Cys-67 each contribute to the Zn(2+) site. Residues Gln-70, 92 to 94 (EGR), and Thr-114 each bind GTP. Asp-126 serves as the catalytic Proton acceptor. Arg-128 (nucleophile) is an active-site residue. The GTP site is built by Thr-149 and Lys-154.

This sequence belongs to the GTP cyclohydrolase II family. As to quaternary structure, homodimer. The cofactor is Zn(2+).

The catalysed reaction is GTP + 4 H2O = 2,5-diamino-6-hydroxy-4-(5-phosphoribosylamino)-pyrimidine + formate + 2 phosphate + 3 H(+). Its pathway is cofactor biosynthesis; riboflavin biosynthesis; 5-amino-6-(D-ribitylamino)uracil from GTP: step 1/4. In terms of biological role, catalyzes the conversion of GTP to 2,5-diamino-6-ribosylamino-4(3H)-pyrimidinone 5'-phosphate (DARP), formate and pyrophosphate. This is GTP cyclohydrolase-2 from Yersinia pestis.